The following is a 285-amino-acid chain: Probable xyloglucan endotransglucosylase/hydrolase protein 12 (285 aa).

The N-terminal stretch at 1-25 is a signal peptide; sequence MAAFATKQSPLLLASLLILIGVATG. In terms of domain architecture, GH16 spans 26-215; that stretch reads SFYDSFDITW…WTNAPFSASY (190 aa). Glu101 functions as the Nucleophile in the catalytic mechanism. Glu105 acts as the Proton donor in catalysis. Glu105 contributes to the xyloglucan binding site. An N-linked (GlcNAc...) asparagine glycan is attached at Asn109. Residues 118–120, 128–130, 194–195, and Gly199 contribute to the xyloglucan site; these read HTN, NRE, and DW. 2 cysteine pairs are disulfide-bonded: Cys224-Cys235 and Cys268-Cys282. Arg273 is a xyloglucan binding site.

The protein belongs to the glycosyl hydrolase 16 family. XTH group 2 subfamily. Post-translationally, contains at least one intrachain disulfide bond essential for its enzymatic activity. In terms of tissue distribution, root specific.

It localises to the secreted. The protein resides in the cell wall. It is found in the extracellular space. The protein localises to the apoplast. The enzyme catalyses breaks a beta-(1-&gt;4) bond in the backbone of a xyloglucan and transfers the xyloglucanyl segment on to O-4 of the non-reducing terminal glucose residue of an acceptor, which can be a xyloglucan or an oligosaccharide of xyloglucan.. In terms of biological role, catalyzes xyloglucan endohydrolysis (XEH) and/or endotransglycosylation (XET). Cleaves and religates xyloglucan polymers, an essential constituent of the primary cell wall, and thereby participates in cell wall construction of growing tissues. This Arabidopsis thaliana (Mouse-ear cress) protein is Probable xyloglucan endotransglucosylase/hydrolase protein 12 (XTH12).